The chain runs to 364 residues: tRNA 2-selenouridine synthase (364 aa).

A Rhodanese domain is found at 14-137 (LIADTPIIDV…LRQTTIQATI (124 aa)). Cysteine 97 acts as the S-selanylcysteine intermediate in catalysis.

It belongs to the SelU family. In terms of assembly, monomer.

It carries out the reaction 5-methylaminomethyl-2-thiouridine(34) in tRNA + selenophosphate + (2E)-geranyl diphosphate + H2O + H(+) = 5-methylaminomethyl-2-selenouridine(34) in tRNA + (2E)-thiogeraniol + phosphate + diphosphate. The catalysed reaction is 5-methylaminomethyl-2-thiouridine(34) in tRNA + (2E)-geranyl diphosphate = 5-methylaminomethyl-S-(2E)-geranyl-thiouridine(34) in tRNA + diphosphate. The enzyme catalyses 5-methylaminomethyl-S-(2E)-geranyl-thiouridine(34) in tRNA + selenophosphate + H(+) = 5-methylaminomethyl-2-(Se-phospho)selenouridine(34) in tRNA + (2E)-thiogeraniol. It catalyses the reaction 5-methylaminomethyl-2-(Se-phospho)selenouridine(34) in tRNA + H2O = 5-methylaminomethyl-2-selenouridine(34) in tRNA + phosphate. In terms of biological role, involved in the post-transcriptional modification of the uridine at the wobble position (U34) of tRNA(Lys), tRNA(Glu) and tRNA(Gln). Catalyzes the conversion of 2-thiouridine (S2U-RNA) to 2-selenouridine (Se2U-RNA). Acts in a two-step process involving geranylation of 2-thiouridine (S2U) to S-geranyl-2-thiouridine (geS2U) and subsequent selenation of the latter derivative to 2-selenouridine (Se2U) in the tRNA chain. In Escherichia coli O139:H28 (strain E24377A / ETEC), this protein is tRNA 2-selenouridine synthase.